The sequence spans 282 residues: Pantothenate synthetase (282 aa).

An ATP-binding site is contributed by 30–37 (MGYLHAGH). H37 (proton donor) is an active-site residue. Q61 is a binding site for (R)-pantoate. Q61 is a binding site for beta-alanine. Residue 147-150 (GKKD) participates in ATP binding. Q153 provides a ligand contact to (R)-pantoate. ATP is bound by residues V176 and 184-187 (MSSR).

The protein belongs to the pantothenate synthetase family. In terms of assembly, homodimer.

Its subcellular location is the cytoplasm. It carries out the reaction (R)-pantoate + beta-alanine + ATP = (R)-pantothenate + AMP + diphosphate + H(+). It participates in cofactor biosynthesis; (R)-pantothenate biosynthesis; (R)-pantothenate from (R)-pantoate and beta-alanine: step 1/1. Functionally, catalyzes the condensation of pantoate with beta-alanine in an ATP-dependent reaction via a pantoyl-adenylate intermediate. This chain is Pantothenate synthetase, found in Geotalea uraniireducens (strain Rf4) (Geobacter uraniireducens).